Reading from the N-terminus, the 1063-residue chain is Probable hemoglobin and hemoglobin-haptoglobin-binding protein 1 (1063 aa).

Positions 1-24 (MTNFKFSLLACSIAFALNASIAYA) are cleaved as a signal peptide. 7 tandem repeats follow at residues 26–29 (QPTN), 30–33 (QPTN), 34–37 (QPTN), 38–41 (QPTN), 42–45 (QPTN), 46–49 (QPTN), and 50–53 (QPTN). The segment at 26 to 53 (QPTNQPTNQPTNQPTNQPTNQPTNQPTN) is 7 X 4 AA tandem repeats of Q-P-T-N. Over residues 28-55 (TNQPTNQPTNQPTNQPTNQPTNQPTNQN) the composition is skewed to low complexity. A disordered region spans residues 28–57 (TNQPTNQPTNQPTNQPTNQPTNQPTNQNSN). A TonB box motif is present at residues 63-70 (EQINVSGS). Residues 66-200 (NVSGSSENIN…LGGSVIFETK (135 aa)) enclose the TBDR plug domain. Residues 208–1063 (DKDYYLSYKR…NYRMSVQFEF (856 aa)) enclose the TBDR beta-barrel domain. A TonB C-terminal box motif is present at residues 1046–1063 (NRFYAPGRNYRMSVQFEF).

It belongs to the TonB-dependent receptor family. Hemoglobin/haptoglobin binding protein subfamily.

The protein localises to the cell outer membrane. Its function is as follows. Acts as a receptor for hemoglobin or the hemoglobin/haptoglobin complex of the human host and is required for heme uptake. The chain is Probable hemoglobin and hemoglobin-haptoglobin-binding protein 1 from Haemophilus influenzae (strain ATCC 51907 / DSM 11121 / KW20 / Rd).